A 1050-amino-acid polypeptide reads, in one-letter code: Probable E3 ubiquitin-protein ligase HERC3 (1050 aa).

RCC1 repeat units lie at residues Met-1–Glu-51, Asp-52–Asp-101, Arg-102–Ala-154, Gly-156–Leu-207, Ser-208–Lys-259, Gly-261–Pro-311, and Ser-313–Gln-366. Positions Tyr-951–Ala-1050 constitute an HECT domain. Residue Cys-1018 is the Glycyl thioester intermediate of the active site.

Ubiquitinated; which promotes degradation by the proteasome.

The protein resides in the cytoplasm. It localises to the cytoplasmic vesicle. It carries out the reaction S-ubiquitinyl-[E2 ubiquitin-conjugating enzyme]-L-cysteine + [acceptor protein]-L-lysine = [E2 ubiquitin-conjugating enzyme]-L-cysteine + N(6)-ubiquitinyl-[acceptor protein]-L-lysine.. Its pathway is protein modification; protein ubiquitination. Its function is as follows. E3 ubiquitin-protein ligase which accepts ubiquitin from an E2 ubiquitin-conjugating enzyme in the form of a thioester and then directly transfers the ubiquitin to targeted substrates. In Homo sapiens (Human), this protein is Probable E3 ubiquitin-protein ligase HERC3 (HERC3).